Reading from the N-terminus, the 860-residue chain is Eukaryotic translation initiation factor 3 subunit C (860 aa).

A disordered region spans residues 1 to 79; that stretch reads MSSRFFHGGS…ESDEEEDRVT (79 aa). Acidic residues-rich tracts occupy residues 16-53 and 67-76; these read SSDE…DDEA and DLDESDEEED. One can recognise a PCI domain in the interval 598–772; it reads FHMHINLELL…NAIVFRKGVE (175 aa). The segment at 808–860 is disordered; the sequence is AFQRDQGPGGRLGRGQGRGGQRTAGGRPPIGGQQRRPGGQQFSGGALGGAIKA. Residues 814-830 show a composition bias toward gly residues; the sequence is GPGGRLGRGQGRGGQRT. The segment covering 831–847 has biased composition (low complexity); the sequence is AGGRPPIGGQQRRPGGQ. Residues 848–860 show a composition bias toward gly residues; that stretch reads QFSGGALGGAIKA.

This sequence belongs to the eIF-3 subunit C family. In terms of assembly, component of the eukaryotic translation initiation factor 3 (eIF-3) complex.

It localises to the cytoplasm. Component of the eukaryotic translation initiation factor 3 (eIF-3) complex, which is involved in protein synthesis of a specialized repertoire of mRNAs and, together with other initiation factors, stimulates binding of mRNA and methionyl-tRNAi to the 40S ribosome. The eIF-3 complex specifically targets and initiates translation of a subset of mRNAs involved in cell proliferation. This chain is Eukaryotic translation initiation factor 3 subunit C, found in Coccidioides immitis (strain RS) (Valley fever fungus).